Reading from the N-terminus, the 411-residue chain is MADVVVGIQWGDEGKGKIVDRIAKDYDFVVRYQGGHNAGHTIVHKGVKHSLHLMPSGVLYPKCKNIISSAVVVSVKDLCEEISAFEDLENRLFISDRAHVILPYHAKKDAFKEKSQNIGTTKKGIGPCYEDKMARSGIRMGDLLDDKILEEKLNAHFKAIEPFKKAYDLGENYEKDLMGYFKTYAPKICPFIKDTTSMLIEANQKGEKILLEGAQGTLLDIDLGTYPFVTSSNTTSASACVSTGLNPKAINEVIGITKAYSTRVGNGPFPSEDTTPMGDHLRTKGVEFGTTTKRPRRCGWLDLVALKYACALNGCTQLALMKLDVLDGIDAIKVCVAYERKGERLEAFPSDLKDCTPIYQTFKGWEKSVGVRKLDDLEPNAREYIRFIEKEVGVKIGLISTSPEREDTIFL.

GTP is bound by residues 11–17 (GDEGKGK) and 39–41 (GHT). The Proton acceptor role is filled by Asp12. Residues Asp12 and Gly39 each contribute to the Mg(2+) site. Residues 12–15 (DEGK), 37–40 (NAGH), Thr121, Arg135, Gln215, Thr230, and Arg294 contribute to the IMP site. Catalysis depends on His40, which acts as the Proton donor. 290–296 (TTTKRPR) lines the substrate pocket. Residues Arg296, 322–324 (KLD), and 400–402 (STS) contribute to the GTP site.

It belongs to the adenylosuccinate synthetase family. Homodimer. The cofactor is Mg(2+).

It is found in the cytoplasm. The catalysed reaction is IMP + L-aspartate + GTP = N(6)-(1,2-dicarboxyethyl)-AMP + GDP + phosphate + 2 H(+). Its pathway is purine metabolism; AMP biosynthesis via de novo pathway; AMP from IMP: step 1/2. Its function is as follows. Plays an important role in the de novo pathway of purine nucleotide biosynthesis. Catalyzes the first committed step in the biosynthesis of AMP from IMP. The protein is Adenylosuccinate synthetase of Helicobacter pylori (strain J99 / ATCC 700824) (Campylobacter pylori J99).